Here is a 126-residue protein sequence, read N- to C-terminus: Profilin-1B (126 aa).

The actin binding stretch occupies residues 2-36 (SWQTYVDTNLVGTGAVTQAAILGLDGNTWATSAGF). Lys104 is subject to N6,N6,N6-trimethyllysine.

Belongs to the profilin family. Occurs in many kinds of cells as a complex with monomeric actin in a 1:1 ratio.

The protein resides in the cytoplasm. It is found in the cytoskeleton. Its function is as follows. Binds to actin and affects the structure of the cytoskeleton. At high concentrations, profilin prevents the polymerization of actin, whereas it enhances it at low concentrations. By binding to PIP2, it inhibits the formation of IP3 and DG. In Acanthamoeba castellanii (Amoeba), this protein is Profilin-1B.